Here is a 354-residue protein sequence, read N- to C-terminus: MSKVQSITRESWILSTFPEWGSWLNEEIEQEQVAPGTFAMWWLGCTGIWLKSEGGTNVCVDFWCGTGKQSHGNPLMKTGHQMQRMAGVKKLQPNLRTTPFVLDPFAIRQIDAVLATHDHNDHIDVNVAAAVMQNCADDVPFIGPQTCVDLWVGWGVPKERCIVVKPGDVVKVKDIEIHALDAFDRTALITLPADQKAAGVLPDGMDVRAVNYLFKTPGGNLYHSGDSHYSNYYAKHGNEHQIDVALGSYGENPRGITDKMTSADILRMAESLNTKVVIPFHHDIWSNFQADPQEIRVLWEMKKDRLKYGFKPFIWQVGGKFTWPLDKDNFEYHYPRGFDDCFTIEPDLPFKSFL.

Belongs to the UlaG family. A divalent metal cation is required as a cofactor.

The protein resides in the cytoplasm. It carries out the reaction L-ascorbate 6-phosphate + H2O = 3-dehydro-L-gulonate 6-phosphate. Its pathway is cofactor degradation; L-ascorbate degradation; D-xylulose 5-phosphate from L-ascorbate: step 1/4. Probably catalyzes the hydrolysis of L-ascorbate-6-P into 3-keto-L-gulonate-6-P. Is essential for L-ascorbate utilization under anaerobic conditions. This Salmonella agona (strain SL483) protein is Probable L-ascorbate-6-phosphate lactonase UlaG.